Here is a 210-residue protein sequence, read N- to C-terminus: UPF0637 protein RBAM_014510 (210 aa).

The protein belongs to the UPF0637 family.

The protein is UPF0637 protein RBAM_014510 of Bacillus velezensis (strain DSM 23117 / BGSC 10A6 / LMG 26770 / FZB42) (Bacillus amyloliquefaciens subsp. plantarum).